A 657-amino-acid chain; its full sequence is UvrABC system protein B (657 aa).

The Helicase ATP-binding domain occupies 25-182; that stretch reads KSIKKGNEFQ…KKLIEIQYER (158 aa). An ATP-binding site is contributed by 38-45; that stretch reads GVTGSGKT. Positions 91 to 114 match the Beta-hairpin motif; that stretch reads YYDYYQPEAYVPQTDTFIEKDASI. Residues 429-595 form the Helicase C-terminal domain; sequence QIDDLYTEIQ…TINKEVRDLI (167 aa). Residues 621-656 form the UVR domain; that stretch reads KKLIKEYTEEMMLAAKNLQFERAAQLRDEIEELKGK.

This sequence belongs to the UvrB family. As to quaternary structure, forms a heterotetramer with UvrA during the search for lesions. Interacts with UvrC in an incision complex.

The protein localises to the cytoplasm. Functionally, the UvrABC repair system catalyzes the recognition and processing of DNA lesions. A damage recognition complex composed of 2 UvrA and 2 UvrB subunits scans DNA for abnormalities. Upon binding of the UvrA(2)B(2) complex to a putative damaged site, the DNA wraps around one UvrB monomer. DNA wrap is dependent on ATP binding by UvrB and probably causes local melting of the DNA helix, facilitating insertion of UvrB beta-hairpin between the DNA strands. Then UvrB probes one DNA strand for the presence of a lesion. If a lesion is found the UvrA subunits dissociate and the UvrB-DNA preincision complex is formed. This complex is subsequently bound by UvrC and the second UvrB is released. If no lesion is found, the DNA wraps around the other UvrB subunit that will check the other stand for damage. The protein is UvrABC system protein B of Clostridium botulinum (strain Alaska E43 / Type E3).